The primary structure comprises 237 residues: 4-hydroxy-tetrahydrodipicolinate reductase (237 aa).

NAD(+) contacts are provided by residues 11-16 (GASGRM), 92-94 (GTT), and 116-119 (GSNF). His-148 (proton donor/acceptor) is an active-site residue. Residue His-149 participates in (S)-2,3,4,5-tetrahydrodipicolinate binding. Catalysis depends on Lys-152, which acts as the Proton donor. (S)-2,3,4,5-tetrahydrodipicolinate is bound at residue 158–159 (GS).

The protein belongs to the DapB family.

It is found in the cytoplasm. It catalyses the reaction (S)-2,3,4,5-tetrahydrodipicolinate + NAD(+) + H2O = (2S,4S)-4-hydroxy-2,3,4,5-tetrahydrodipicolinate + NADH + H(+). The catalysed reaction is (S)-2,3,4,5-tetrahydrodipicolinate + NADP(+) + H2O = (2S,4S)-4-hydroxy-2,3,4,5-tetrahydrodipicolinate + NADPH + H(+). Its pathway is amino-acid biosynthesis; L-lysine biosynthesis via DAP pathway; (S)-tetrahydrodipicolinate from L-aspartate: step 4/4. Catalyzes the conversion of 4-hydroxy-tetrahydrodipicolinate (HTPA) to tetrahydrodipicolinate. In Xylella fastidiosa (strain 9a5c), this protein is 4-hydroxy-tetrahydrodipicolinate reductase.